The primary structure comprises 256 residues: 5'-nucleotidase SurE (256 aa).

Residues Asp8, Asp9, Ser39, and Asn95 each coordinate a divalent metal cation.

It belongs to the SurE nucleotidase family. A divalent metal cation is required as a cofactor.

Its subcellular location is the cytoplasm. It carries out the reaction a ribonucleoside 5'-phosphate + H2O = a ribonucleoside + phosphate. In terms of biological role, nucleotidase that shows phosphatase activity on nucleoside 5'-monophosphates. This Methanosphaera stadtmanae (strain ATCC 43021 / DSM 3091 / JCM 11832 / MCB-3) protein is 5'-nucleotidase SurE.